The following is a 282-amino-acid chain: uncharacterized protein (282 aa).

Residues 205 to 277 (LAQQRRVYAQ…DELQNKARDA (73 aa)) adopt a coiled-coil conformation.

This is an uncharacterized protein from Treponema pallidum (strain Nichols).